A 346-amino-acid polypeptide reads, in one-letter code: MLYRSALRASRSFTPRLASTNSRLVSSLVFLEHKAGKLNEASLSAVTAAKTLGNDTHGLLVGTKSEIENVLDRTKEIKDLSKIYLATSDTYSHSLAEPLASLLASIASAKDVSHIFAAHTAVGKNIFPRLAGLLDTSLIADIIALESSGDTFTRPIYAGNAVLTIKSSPKDSVKVVTVRSTAFDKAAVANGSAAVEDVDIITVDTPTQFVSEELTVSSRPDLASAARVVSGGRALKSKESFDTILDPLADSLGAAVGASRAAVDAGYADNSLQVGQTGKVVAPELYVAIGISGAIQHLAGMKESKMIIAINKDPDAPIFQVADVGLVADLFESVPQLVKEIDNVKV.

285–313 contributes to the FAD binding site; that stretch reads LYVAIGISGAIQHLAGMKESKMIIAINKD.

Belongs to the ETF alpha-subunit/FixB family. Heterodimer of an alpha and a beta subunit. FAD serves as cofactor.

The protein resides in the mitochondrion matrix. The electron transfer flavoprotein serves as a specific electron acceptor for several dehydrogenases, including five acyl-CoA dehydrogenases, glutaryl-CoA and sarcosine dehydrogenase. It transfers the electrons to the main mitochondrial respiratory chain via ETF-ubiquinone oxidoreductase (ETF dehydrogenase). This Cryptococcus neoformans var. neoformans serotype D (strain B-3501A) (Filobasidiella neoformans) protein is Probable electron transfer flavoprotein subunit alpha, mitochondrial (ETF1).